The primary structure comprises 492 residues: Probable malate:quinone oxidoreductase 1 (492 aa).

The protein belongs to the MQO family. FAD is required as a cofactor.

It carries out the reaction (S)-malate + a quinone = a quinol + oxaloacetate. The protein operates within carbohydrate metabolism; tricarboxylic acid cycle; oxaloacetate from (S)-malate (quinone route): step 1/1. The protein is Probable malate:quinone oxidoreductase 1 of Staphylococcus epidermidis (strain ATCC 35984 / DSM 28319 / BCRC 17069 / CCUG 31568 / BM 3577 / RP62A).